A 1129-amino-acid polypeptide reads, in one-letter code: Egg-laying defective protein 27 (1129 aa).

Polar residues predominate over residues 1–11; the sequence is MSRFDSQCSSE. Positions 1-43 are disordered; it reads MSRFDSQCSSEDVNKEDECVPSSSEDSQDGVSSPMENDDEPEF. Residues 22 to 33 are compositionally biased toward low complexity; sequence SSSEDSQDGVSS. The 137-residue stretch at 87–223 folds into the BAH domain; the sequence is TLYRLRDSVF…QDSTKLASTH (137 aa). Positions 224–327 constitute an ELM2 domain; the sequence is YAIRVGTSFQ…DALSELNAND (104 aa). Positions 332–384 constitute an SANT domain; the sequence is TDVDNMTQDDAKKFAKGIKQLGKNFSRIHRELLPHHSREQLVSYYYLWKKTPE. A disordered region spans residues 388–434; the sequence is PKQAARRVNPTSIKRPTKEKVKASRPTSTEYLDFDSASESDVENNGP. Residues 419 to 429 are compositionally biased toward acidic residues; the sequence is LDFDSASESDV. The segment at 439 to 485 adopts a GATA-type; atypical zinc-finger fold; it reads CHHCYGAESKDWHHANGLLLCTDCRLHYKKYGQLRQIANRPSQVPAC. Disordered stretches follow at residues 488 to 636, 693 to 717, 790 to 814, 899 to 950, and 982 to 1040; these read KRSN…DPMP, RDETNGETNSDLKDDENVEPDSPED, QQNQIKKEQQQSQPTPQQIHQQQAQ, MIAE…HAAA, and MAAQ…REHA. 2 stretches are compositionally biased toward polar residues: residues 525–545 and 561–573; these read PSTVSNGAPNLTAEETPTKKL and VINNVEKSNSSEE. Acidic residues-rich tracts occupy residues 613–634 and 705–717; these read SYDDDDDEEEGKMTIDEGDDDP and KDDENVEPDSPED. A compositionally biased stretch (low complexity) spans 899 to 914; it reads MIAEQQQQQRHAAAQQ. Residues 915-932 show a composition bias toward basic and acidic residues; that stretch reads LREREQREQRERERERQH. Low complexity-rich tracts occupy residues 933 to 950 and 983 to 999; these read QQQAQQALHQQQQQHAAA and AAQQQQQQQQAAQAQAQ. Basic and acidic residues predominate over residues 1000–1040; the sequence is RDQERERREREAREREAAREREREQAAREAAARDQAAREHA.

In terms of assembly, interacts with ceh-6, sem-4 and sox-2. Interacts with wdr-5.1. In terms of tissue distribution, expression detected in anterior intestine and head region.

It is found in the nucleus. Transcription factor which promotes stress survival and delays aging. Required for cell cycle progression and development of the mesodermal and endodermal embryonic lineages. Required for normal T-cell polarity, for correct migration of QL neuroblast descendants and other cells, for embryonic patterning and for the embryonic expression of hlh-8. Also required for the transdifferentiation of the Y rectal epithelial cell to the PDA motor neuron during larval development. The sequence is that of Egg-laying defective protein 27 from Caenorhabditis elegans.